Reading from the N-terminus, the 776-residue chain is MVIMSEFSAVPTGTGQGQQKPLRVGFYDVERTLGKGNFAVVKLARHRVTKTQVAIKIIDKTRLDSSNLEKIYREVQLMKLLNHPNIIKLYQVMETKDMLYIVTEFAKNGEMFDYLTSNGHLSENEARKKFWQILSAVEYCHNHHIVHRDLKTENLLLDGNMDIKLADFGFGNFYKPGEPLSTWCGSPPYAAPEVFEGKEYEGPQLDIWSLGVVLYVLVCGSLPFDGPNLPTLRQRVLEGRFRIPFFMSQDCETLIRRMLVVDPAKRITIAQIRQHRWMQADPTLLQQDDPAFSMQGYTSNLGDYNEQVLGIMQALGIDRQRTVESLQNSSYNHFAAIYYLLLERLREHRSTQPSSRATPAPARQPQLRNSDLSSLEVPQEILPCDPFRPSLLCPQPQALAQSVLQAEIDCDLHSSLQPLFFPLDTNCSGVFRHRSISPSSLLDTAISEEARQGPSLEEEQEVQEPLPGSTGRRHTLAEVSTHFSPLNPPCIIVSSSAAVSPSEGTSSDSCLPFSASEGPAGLGGGLATPGLLGTSSPVRLASPFLGSQSATPVLQSQAGLGATVLPPVSFQEGRRASDTSLTQGLKAFRQQLRKNARTKGFLGLNKIKGLARQVCQSSIRGSRGGMSTFHTPAPSSGLQGCTASSREGRSLLEEVLHQQRLLQLQHHSAVSSDYQQAPQLSPVPYVLTPCDGLLVSGIPLLPTPLLQPGMSPVASAAQLLDAHLHISAGPVALPTGPLPQCLTRLSPSCDPAGLPQGDCEMEDLTSGQRGTFVLVQ.

Residues 27-278 form the Protein kinase domain; that stretch reads YDVERTLGKG…IAQIRQHRWM (252 aa). ATP is bound by residues 33-41 and Lys56; that span reads LGKGNFAVV. Asp149 (proton acceptor) is an active-site residue. Thr182 is subject to Phosphothreonine; by LKB1 and GSK3-beta. Ser186 carries the post-translational modification Phosphoserine; by autocatalysis. A UBA domain is found at 303 to 343; the sequence is DYNEQVLGIMQALGIDRQRTVESLQNSSYNHFAAIYYLLLE. Thr322 is subject to Phosphothreonine; by CaMK1. 2 disordered regions span residues 350–371 and 449–472; these read STQP…RNSD and EARQ…STGR. Residue Ser577 is modified to Phosphoserine; by PKA. Residues 586 to 612 are RK-rich region; that stretch reads KAFRQQLRKNARTKGFLGLNKIKGLAR. The tract at residues 621-643 is disordered; that stretch reads GSRGGMSTFHTPAPSSGLQGCTA. Positions 628–643 are enriched in polar residues; that stretch reads TFHTPAPSSGLQGCTA.

The protein belongs to the protein kinase superfamily. CAMK Ser/Thr protein kinase family. AMPK subfamily. In terms of assembly, interacts (when phosphorylated on Thr-182 and Ser-186) with YWHAZ. Interacts with ATP1A1. Mg(2+) is required as a cofactor. In terms of processing, phosphorylated at Thr-182 by STK11/LKB1 in complex with STE20-related adapter-alpha (STRADA) pseudo kinase and CAB39, leading to its activation. Phosphorylation at Thr-182 promotes autophosphorylation at Ser-186, which is required for sustained activity. Autophosphorylation at Ser-186 is maintained by sequential phosphorylation at Thr-182 by GSK3-beta. GSK3-beta cannot initiate phosphorylation at Thr-182, it can only maintain it. Phosphorylation at Ser-577 by PKA promotes translocation to the cytoplasm. Phosphorylation at Thr-322 by CaMK1 following intracellular sodium concentration leads to activation.

It is found in the cytoplasm. Its subcellular location is the nucleus. The enzyme catalyses L-seryl-[protein] + ATP = O-phospho-L-seryl-[protein] + ADP + H(+). It carries out the reaction L-threonyl-[protein] + ATP = O-phospho-L-threonyl-[protein] + ADP + H(+). Its activity is regulated as follows. Activated by phosphorylation on Thr-182. Also activated by phosphorylation on Thr-322 in response to increases in intracellular sodium in parallel with elevations in intracellular calcium through the reversible sodium/calcium exchanger. Serine/threonine-protein kinase involved in various processes such as cell cycle regulation, gluconeogenesis and lipogenesis regulation, muscle growth and differentiation and tumor suppression. Phosphorylates HDAC4, HDAC5, PPME1, SREBF1, CRTC1/TORC1 and CRTC2/TORC2. Acts as a tumor suppressor and plays a key role in p53/TP53-dependent anoikis, a type of apoptosis triggered by cell detachment: required for phosphorylation of p53/TP53 in response to loss of adhesion and is able to suppress metastasis. Part of a sodium-sensing signaling network, probably by mediating phosphorylation of PPME1: following increases in intracellular sodium, SIK1 is activated by CaMK1 and phosphorylates PPME1 subunit of protein phosphatase 2A (PP2A), leading to dephosphorylation of sodium/potassium-transporting ATPase ATP1A1 and subsequent increase activity of ATP1A1. Acts as a regulator of muscle cells by phosphorylating and inhibiting class II histone deacetylases HDAC4 and HDAC5, leading to promote expression of MEF2 target genes in myocytes. Also required during cardiomyogenesis by regulating the exit of cardiomyoblasts from the cell cycle via down-regulation of CDKN1C/p57Kip2. Acts as a regulator of hepatic gluconeogenesis by phosphorylating and repressing the CREB-specific coactivators CRTC1/TORC1 and CRTC2/TORC2, leading to inhibit CREB activity. Also regulates hepatic lipogenesis by phosphorylating and inhibiting SREBF1. In concert with CRTC1/TORC1, regulates the light-induced entrainment of the circadian clock by attenuating PER1 induction; represses CREB-mediated transcription of PER1 by phosphorylating and deactivating CRTC1/TORC1. The protein is Serine/threonine-protein kinase SIK1 (Sik1) of Rattus norvegicus (Rat).